The primary structure comprises 394 residues: Elongation factor Tu-A (394 aa).

The tr-type G domain occupies 10–204; sequence KPHVNVGTIG…ALDTYIPEPE (195 aa). The tract at residues 19–26 is G1; sequence GHVDHGKT. 19 to 26 contributes to the GTP binding site; it reads GHVDHGKT. Residue threonine 26 coordinates Mg(2+). The G2 stretch occupies residues 60–64; the sequence is GITIN. The interval 81 to 84 is G3; sequence DCPG. Residues 81-85 and 136-139 contribute to the GTP site; these read DCPGH and NKCD. A G4 region spans residues 136-139; the sequence is NKCD. A G5 region spans residues 174–176; it reads SAL.

Belongs to the TRAFAC class translation factor GTPase superfamily. Classic translation factor GTPase family. EF-Tu/EF-1A subfamily. In terms of assembly, monomer.

The protein resides in the cytoplasm. It carries out the reaction GTP + H2O = GDP + phosphate + H(+). Functionally, GTP hydrolase that promotes the GTP-dependent binding of aminoacyl-tRNA to the A-site of ribosomes during protein biosynthesis. This Vibrio cholerae serotype O1 (strain ATCC 39315 / El Tor Inaba N16961) protein is Elongation factor Tu-A.